The sequence spans 247 residues: tRNA pseudouridine synthase A 1 (247 aa).

Asp-53 serves as the catalytic Nucleophile. Position 111 (Tyr-111) interacts with substrate.

The protein belongs to the tRNA pseudouridine synthase TruA family. In terms of assembly, homodimer.

It catalyses the reaction uridine(38/39/40) in tRNA = pseudouridine(38/39/40) in tRNA. In terms of biological role, formation of pseudouridine at positions 38, 39 and 40 in the anticodon stem and loop of transfer RNAs. The protein is tRNA pseudouridine synthase A 1 of Bacillus cereus (strain ATCC 10987 / NRS 248).